A 361-amino-acid polypeptide reads, in one-letter code: MFAKGKGSAVPSDGQAREKLALYVYEYLLHVGAQKSAQTFLSEIRWEKNITLGEPPGFLHSWWCVFWDLYCAAPERRDTCEHSSEAKAFHDYSAAAAPSPVLGNIPPNDGMPGGPIPPGFFQPFMSPRYAGGPRPPIRMGNQPPGGVPGTQPLMPNSMDPTRQQGHPNMGGSMQRMNPPRGMGPMGPGPQNYGSGMRPPPNSLGPAMPGINMGPGAGRPWPNPNSANSIPYSSSSPGTYVGPPGGGGPPGTPIMPSPADSTNSSDNIYTMINPVPPGGSRSNFPMGPGSDGPMGGMGGMEPHHMNGSLGSGDINGLPKNSPNNISGISNPPGTPRDDGELGGNFLHSFQNDNYSPSMTMSV.

At methionine 1 the chain carries N-acetylmethionine. In terms of domain architecture, LisH spans 16-48; the sequence is AREKLALYVYEYLLHVGAQKSAQTFLSEIRWEK. Residues arginine 128, arginine 134, and arginine 138 each carry the asymmetric dimethylarginine modification. Disordered stretches follow at residues 140-166 and 184-361; these read GNQPPGGVPGTQPLMPNSMDPTRQQGH and PMGP…TMSV. Residues 223–241 show a composition bias toward low complexity; that stretch reads PNSANSIPYSSSSPGTYVG. Over residues 245–255 the composition is skewed to pro residues; it reads GGGPPGTPIMP. The span at 258 to 269 shows a compositional bias: polar residues; the sequence is ADSTNSSDNIYT. Residues 288–298 are compositionally biased toward gly residues; it reads GSDGPMGGMGG. The span at 319 to 330 shows a compositional bias: low complexity; it reads NSPNNISGISNP. Residues serine 320, serine 325, and serine 328 each carry the phosphoserine modification. Position 333 is a phosphothreonine (threonine 333). Polar residues predominate over residues 346–361; that stretch reads HSFQNDNYSPSMTMSV. A phosphoserine mark is found at serine 354 and serine 360.

It localises to the nucleus. In terms of biological role, may be involved in transcription regulation of the alpha 2(I) collagen gene where it binds to the single-stranded polypyrimidine sequences in the promoter region. This is Single-stranded DNA-binding protein 3 (Ssbp3) from Rattus norvegicus (Rat).